The chain runs to 544 residues: Chaperonin GroEL (544 aa).

ATP is bound by residues 29 to 32, Lys50, 86 to 90, Gly414, 477 to 479, and Asp493; these read TMGP, DGTTT, and NAV.

This sequence belongs to the chaperonin (HSP60) family. Forms a cylinder of 14 subunits composed of two heptameric rings stacked back-to-back. Interacts with the co-chaperonin GroES.

The protein resides in the cytoplasm. It carries out the reaction ATP + H2O + a folded polypeptide = ADP + phosphate + an unfolded polypeptide.. Its function is as follows. Together with its co-chaperonin GroES, plays an essential role in assisting protein folding. The GroEL-GroES system forms a nano-cage that allows encapsulation of the non-native substrate proteins and provides a physical environment optimized to promote and accelerate protein folding. In Campylobacter curvus (strain 525.92), this protein is Chaperonin GroEL.